Here is a 903-residue protein sequence, read N- to C-terminus: Translation initiation factor IF-2 (903 aa).

Positions 49–314 (LNREHGSGPD…GSSLQQGFNK (266 aa)) are disordered. A compositionally biased stretch (polar residues) spans 68–82 (STLNIQGTGGKSKSV). Basic and acidic residues-rich tracts occupy residues 93–163 (VKRD…EAAE) and 174–225 (EVSK…ENAT). Residues 265–279 (GRARPAKVARQKKSN) are compositionally biased toward basic residues. The span at 280–293 (KHSESKADREEARA) shows a compositional bias: basic and acidic residues. A tr-type G domain is found at 402–571 (PRAPVVTIMG…LLQSEVLELK (170 aa)). The G1 stretch occupies residues 411 to 418 (GHVDHGKT). Residue 411–418 (GHVDHGKT) participates in GTP binding. The segment at 436–440 (GITQH) is G2. The interval 457-460 (DTPG) is G3. GTP-binding positions include 457 to 461 (DTPGH) and 511 to 514 (NKID). The segment at 511–514 (NKID) is G4. Residues 547–549 (SAK) form a G5 region.

The protein belongs to the TRAFAC class translation factor GTPase superfamily. Classic translation factor GTPase family. IF-2 subfamily.

It localises to the cytoplasm. One of the essential components for the initiation of protein synthesis. Protects formylmethionyl-tRNA from spontaneous hydrolysis and promotes its binding to the 30S ribosomal subunits. Also involved in the hydrolysis of GTP during the formation of the 70S ribosomal complex. This chain is Translation initiation factor IF-2, found in Cronobacter sakazakii (strain ATCC BAA-894) (Enterobacter sakazakii).